We begin with the raw amino-acid sequence, 356 residues long: MVEFLNSKNPQDIIDKLSLINNNGNKNIGNGNKTNNKKYITYSKNVFIPICNWCKNICGYCTFRRENYKLMNKQEIKEILLTGNKHGCREALFTFGETVDENPKIKEDLKKMGYNNILEYLYDISDWCLTNTDLLPHTNCGILSYEELKTLKEVNASMGLMLENSSDRLYNTIAHKDSPGKEPKKRLKMIEDAGKLKIPFTTGILVGIGETNEEIVQSLVDINNIHKKYGHIQEVIIQNFRAKESIPMSNYEEPTPLKMLKVLIVAKLILKDISIQVPPNLNSETGQLFLFAGVDDWGGVSPITKDFVNPEAPWPKIEELKKYTEEFGYSLKERLPVYEKYINENWLSCKVLEKIK.

The region spanning Ile40–Asn280 is the Radical SAM core domain. Cys54, Cys58, and Cys61 together coordinate [4Fe-4S] cluster.

Belongs to the radical SAM superfamily. CofG family. As to quaternary structure, consists of two subunits, CofG and CofH. Requires [4Fe-4S] cluster as cofactor.

It carries out the reaction 5-amino-5-(4-hydroxybenzyl)-6-(D-ribitylimino)-5,6-dihydrouracil + S-adenosyl-L-methionine = 7,8-didemethyl-8-hydroxy-5-deazariboflavin + 5'-deoxyadenosine + L-methionine + NH4(+) + H(+). Its pathway is cofactor biosynthesis; coenzyme F0 biosynthesis. Its function is as follows. Catalyzes the radical-mediated synthesis of 7,8-didemethyl-8-hydroxy-5-deazariboflavin from 5-amino-5-(4-hydroxybenzyl)-6-(D-ribitylimino)-5,6-dihydrouracil. The protein is 7,8-didemethyl-8-hydroxy-5-deazariboflavin synthase of Methanococcus aeolicus (strain ATCC BAA-1280 / DSM 17508 / OCM 812 / Nankai-3).